Consider the following 565-residue polypeptide: CTP synthase (565 aa).

The segment at Met1 to Ile272 is amidoligase domain. Ser18 contacts CTP. A UTP-binding site is contributed by Ser18. An ATP-binding site is contributed by Ser19–Ile24. Tyr59 provides a ligand contact to L-glutamine. Asp76 serves as a coordination point for ATP. 2 residues coordinate Mg(2+): Asp76 and Glu146. CTP-binding positions include Asp153–Glu155, Lys193–Gln198, and Lys229. Residues Lys193–Gln198 and Lys229 contribute to the UTP site. In terms of domain architecture, Glutamine amidotransferase type-1 spans Thr299–Gly543. L-glutamine is bound at residue Gly363. Residue Cys390 is the Nucleophile; for glutamine hydrolysis of the active site. Residues Leu391 to Gln394, Glu414, and Arg471 each bind L-glutamine. Catalysis depends on residues His516 and Glu518.

This sequence belongs to the CTP synthase family. As to quaternary structure, homotetramer.

It catalyses the reaction UTP + L-glutamine + ATP + H2O = CTP + L-glutamate + ADP + phosphate + 2 H(+). It carries out the reaction L-glutamine + H2O = L-glutamate + NH4(+). The catalysed reaction is UTP + NH4(+) + ATP = CTP + ADP + phosphate + 2 H(+). It functions in the pathway pyrimidine metabolism; CTP biosynthesis via de novo pathway; CTP from UDP: step 2/2. Allosterically activated by GTP, when glutamine is the substrate; GTP has no effect on the reaction when ammonia is the substrate. The allosteric effector GTP functions by stabilizing the protein conformation that binds the tetrahedral intermediate(s) formed during glutamine hydrolysis. Inhibited by the product CTP, via allosteric rather than competitive inhibition. Functionally, catalyzes the ATP-dependent amination of UTP to CTP with either L-glutamine or ammonia as the source of nitrogen. Regulates intracellular CTP levels through interactions with the four ribonucleotide triphosphates. This Chlorobium phaeobacteroides (strain BS1) protein is CTP synthase.